The primary structure comprises 242 residues: Tropomyosin-1 (242 aa).

Disordered stretches follow at residues 1-31 and 65-96; these read MDAI…ELTA and TSLT…QTDY. The stretch at 1-242 forms a coiled coil; sequence MDAIKKKMSA…DELLLELASM (242 aa). 2 stretches are compositionally biased toward basic and acidic residues: residues 13–23 and 70–96; these read TKLEEADKQAQ and KYNE…QTDY.

Belongs to the tropomyosin family. As to quaternary structure, homodimer. As to expression, expressed ubiquitously.

The polypeptide is Tropomyosin-1 (TPM1) (Podocoryna carnea (Hydrozoan)).